The following is a 570-amino-acid chain: Small ribosomal subunit protein bS1 (570 aa).

S1 motif domains follow at residues Gly52–Glu116, Gly134–Arg199, Gly220–Lys288, Gly305–Lys375, Gly392–Lys462, and Gly479–Lys548.

Belongs to the bacterial ribosomal protein bS1 family.

In terms of biological role, binds mRNA; thus facilitating recognition of the initiation point. It is needed to translate mRNA with a short Shine-Dalgarno (SD) purine-rich sequence. This chain is Small ribosomal subunit protein bS1 (rpsA), found in Chlamydia muridarum (strain MoPn / Nigg).